The following is a 98-amino-acid chain: NADH-ubiquinone oxidoreductase chain 4L (98 aa).

The next 3 helical transmembrane spans lie at 1 to 21 (MPSI…GTLI), 26 to 46 (LMSS…LTSL), and 61 to 81 (IILL…LVMV).

Belongs to the complex I subunit 4L family. As to quaternary structure, core subunit of respiratory chain NADH dehydrogenase (Complex I) which is composed of 45 different subunits.

Its subcellular location is the mitochondrion inner membrane. The catalysed reaction is a ubiquinone + NADH + 5 H(+)(in) = a ubiquinol + NAD(+) + 4 H(+)(out). Functionally, core subunit of the mitochondrial membrane respiratory chain NADH dehydrogenase (Complex I) which catalyzes electron transfer from NADH through the respiratory chain, using ubiquinone as an electron acceptor. Part of the enzyme membrane arm which is embedded in the lipid bilayer and involved in proton translocation. The protein is NADH-ubiquinone oxidoreductase chain 4L (MT-ND4L) of Otolemur crassicaudatus (Brown greater galago).